Here is a 445-residue protein sequence, read N- to C-terminus: Phosphatidate cytidylyltransferase 2 (445 aa).

A compositionally biased stretch (basic and acidic residues) spans 1–39 (MTELRQRVAREPEAPPEDKESESEAKADGETASDSESRV). The interval 1-52 (MTELRQRVAREPEAPPEDKESESEAKADGETASDSESRVEAVTQPPSADDTP) is disordered. The residue at position 21 (serine 21) is a Phosphoserine. Phosphothreonine is present on threonine 31. Phosphoserine is present on residues serine 33, serine 35, and serine 37. Threonine 51 bears the Phosphothreonine mark. The next 6 helical transmembrane spans lie at 79–99 (MIAF…MIVM), 132–152 (FLLC…FFTL), 166–186 (HRFI…LSLV), 213–233 (LVIH…SCVI), 262–282 (GFIG…YVMS), and 340–360 (IALS…ASGF).

This sequence belongs to the CDS family. In terms of assembly, homodimer.

Its subcellular location is the endoplasmic reticulum membrane. The catalysed reaction is a 1,2-diacyl-sn-glycero-3-phosphate + CTP + H(+) = a CDP-1,2-diacyl-sn-glycerol + diphosphate. It catalyses the reaction 1-octadecanoyl-2-(5Z,8Z,11Z,14Z-eicosatetraenoyl)-sn-glycero-3-phosphate + CTP + H(+) = 1-octadecanoyl-2-(5Z,8Z,11Z,14Z-eicosatetraenoyl)-sn-glycero-3-cytidine-5'-diphosphate + diphosphate. It carries out the reaction 1-octadecanoyl-2-(9Z,12Z-octadecadienoyl)-sn-glycero-3-phosphate + CTP + H(+) = 1-octadecanoyl-2-(9Z,12Z-octadecadienoyl)-sn-glycero-3-cytidine-5'-diphosphate + diphosphate. The enzyme catalyses 1-hexadecanoyl-2-(5Z,8Z,11Z,14Z-eicosatetraenoyl)-sn-glycero-3-phosphate + CTP + H(+) = 1-hexadecanoyl-2-(5Z,8Z,11Z,14Z-eicosatetraenoyl)-sn-glycero-3-cytidine-5'-diphosphate + diphosphate. The catalysed reaction is 1,2-di-(5Z,8Z,11Z,14Z)-eicosatetraenoyl-sn-glycero-3-phosphate + CTP + H(+) = 1,2-di-(5Z,8Z,11Z,14Z-eicosatetraenoyl)-sn-glycero-3-cytidine-5'-diphosphate + diphosphate. It catalyses the reaction 1-octadecanoyl-2-(9Z-octadecenoyl)-sn-glycero-3-phosphate + CTP + H(+) = 1-octadecanoyl-2-(9Z-octadecenoyl)-sn-glycero-3-cytidine-5'-diphosphate + diphosphate. It carries out the reaction 1-octadecanoyl-2-(4Z,7Z,10Z,13Z,16Z,19Z-docosahexaenoyl)-sn-glycero-3-phosphate + CTP + H(+) = 1-octadecanoyl-2-(4Z,7Z,10Z,13Z,16Z,19Z-docosahexaenoyl)-sn-glycero-3-cytidine-5'-diphosphate + diphosphate. The enzyme catalyses 1,2-di-(9Z,12Z-octadecadienoyl)-sn-glycero-3-phosphate + CTP + H(+) = 1,2-di-(9Z,12Z-octadecadienoyl)-sn-glycero-3-cytidine-5'-diphosphate + diphosphate. The catalysed reaction is 1,2-di-(9Z-octadecenoyl)-sn-glycero-3-phosphate + CTP + H(+) = 1,2-di-(9Z-octadecenoyl)-sn-glycero-3-cytidine-5'-diphosphate + diphosphate. It participates in phospholipid metabolism; CDP-diacylglycerol biosynthesis; CDP-diacylglycerol from sn-glycerol 3-phosphate: step 3/3. Catalyzes the conversion of phosphatidic acid (PA) to CDP-diacylglycerol (CDP-DAG), an essential intermediate in the synthesis of phosphatidylglycerol, cardiolipin and phosphatidylinositol. Exhibits specificity for the nature of the acyl chains at the sn-1 and sn-2 positions in the substrate, PA and the preferred acyl chain composition is 1-stearoyl-2-arachidonoyl-sn-phosphatidic acid. Plays an important role in regulating the growth and maturation of lipid droplets which are storage organelles at the center of lipid and energy homeostasis. The polypeptide is Phosphatidate cytidylyltransferase 2 (CDS2) (Bos taurus (Bovine)).